Reading from the N-terminus, the 299-residue chain is GTPase Era (299 aa).

The Era-type G domain occupies 4-171 (KSGFVAILGR…VDILSENLEE (168 aa)). The G1 stretch occupies residues 12–19 (GRPNVGKS). 12 to 19 (GRPNVGKS) serves as a coordination point for GTP. The tract at residues 38 to 42 (QTTRN) is G2. Residues 59-62 (DTPG) form a G3 region. GTP-binding positions include 59-63 (DTPGI) and 121-124 (NKID). A G4 region spans residues 121–124 (NKID). The interval 150–152 (ISA) is G5. The KH type-2 domain maps to 202 to 280 (TREEIPHSVA…FLETWVKVKK (79 aa)).

Belongs to the TRAFAC class TrmE-Era-EngA-EngB-Septin-like GTPase superfamily. Era GTPase family. Monomer.

Its subcellular location is the cytoplasm. It is found in the cell membrane. Functionally, an essential GTPase that binds both GDP and GTP, with rapid nucleotide exchange. Plays a role in 16S rRNA processing and 30S ribosomal subunit biogenesis and possibly also in cell cycle regulation and energy metabolism. This chain is GTPase Era, found in Streptococcus gordonii (strain Challis / ATCC 35105 / BCRC 15272 / CH1 / DL1 / V288).